A 147-amino-acid polypeptide reads, in one-letter code: Transthyretin (147 aa).

The first 20 residues, methionine 1–alanine 20, serve as a signal peptide directing secretion. Sulfocysteine is present on cysteine 30. Lysine 35 is an L-thyroxine binding site. A 4-carboxyglutamate modification is found at glutamate 62. A Phosphoserine modification is found at serine 72. Glutamate 74 is an L-thyroxine binding site. A glycan (N-linked (GlcNAc...) asparagine) is linked at asparagine 118. Residue serine 137 coordinates L-thyroxine.

The protein belongs to the transthyretin family. In terms of assembly, homotetramer. Dimer of dimers. In the homotetramer, subunits assemble around a central channel that can accommodate two ligand molecules. Interacts with RBP4. Sulfonation of the reactive cysteine Cys-30 enhances the stability of the native conformation of TTR, avoiding misassembly of the protein leading to amyloid formation. Detected in serum (at protein level).

The protein localises to the secreted. Functionally, thyroid hormone-binding protein. Probably transports thyroxine from the bloodstream to the brain. The protein is Transthyretin (TTR) of Bos taurus (Bovine).